The chain runs to 87 residues: DNA-directed RNA polymerase subunit omega (87 aa).

This sequence belongs to the RNA polymerase subunit omega family. The RNAP catalytic core consists of 2 alpha, 1 beta, 1 beta' and 1 omega subunit. When a sigma factor is associated with the core the holoenzyme is formed, which can initiate transcription.

It carries out the reaction RNA(n) + a ribonucleoside 5'-triphosphate = RNA(n+1) + diphosphate. In terms of biological role, promotes RNA polymerase assembly. Latches the N- and C-terminal regions of the beta' subunit thereby facilitating its interaction with the beta and alpha subunits. This is DNA-directed RNA polymerase subunit omega from Pseudomonas fluorescens (strain ATCC BAA-477 / NRRL B-23932 / Pf-5).